We begin with the raw amino-acid sequence, 764 residues long: MVDFSLRKTRNYWKGSNSSSKQNSEVSLKNAEKKKPVTNPYANLTVPNAANLPTLDAKERNKAASSMQRRLSIHTANYTAPNLDYSMPLPSSNLIDQAMGDEQPTGKVPAINVDDEYGQRNGHSRSATPTDNETSRRPETLRPPELNRKRLGGSGSSAPSGSSRMTMVAPLNPLSPYANLFHPASLRKILSDPQFSAKKFIHERLSEASAVDIDLFTSNLTELSTDVQEEVKRNIYKSYNEIITVNNDLHEASAELKQLRSSISELTKVTDQFVTVAKSRIQMDEQQKMLHTQRPSSPQKTQSSSLLPPVSSDINGTNPKRDRTSVMILEKMWDTQLATLYKNVEGAQKHLGPASNRHLLIESSDWTELNISTQKPLQTVQLYILNDAVLVAGKTKNKQHELIVSQCCPIRDVTISTDREYRTKLMFNFGNSNTCLYETRDINECMRVLDAFRKAKDDLRDITENEKENSKRIKESLVYLQNTQQTPGREGSKSPAKRRSMGLSPSSASRPLSASMDQFILQNLSISVHSRSKSHDWSSLSHKFKLVDNLIEEVDIDLARLKFDSAVNTLLEAESQLATMKDPTKEEDAIILNVLTLKLDQRRDDILTKVTQRNLFINEIAHLREGVKTLIRLGLPEAGLDLLLQNKSNLIQELLLQVGSSEHPSLYLTELAIVRFQIIKRTVIVFRELFHRDHDKLSSILVSWCSHEVEKHFNLVSKQLLNGDKLSPDAIRYSRKQIDDLKTVGLDFVYKLDEFIKNNINKLG.

Disordered stretches follow at residues methionine 1–proline 47 and leucine 94–methionine 165. Residues serine 16–serine 27 show a composition bias toward low complexity. The segment covering glutamate 133–arginine 148 has biased composition (basic and acidic residues). Lysine 232 participates in a covalent cross-link: Glycyl lysine isopeptide (Lys-Gly) (interchain with G-Cter in ubiquitin). The stretch at tyrosine 239–glutamine 272 forms a coiled coil. Disordered stretches follow at residues glutamine 287–arginine 321 and tyrosine 479–proline 511. Residues methionine 289–asparagine 318 show a composition bias toward polar residues.

The protein belongs to the EXO84 family. As to quaternary structure, component of the exocyst complex.

It is found in the cytoplasmic vesicle. Its subcellular location is the secretory vesicle. Its function is as follows. Involved in the secretory pathway as part of the exocyst complex which tethers secretory vesicles to the sites of exocytosis. Plays a role in both the assembly of the exocyst and the polarization of this complex to specific sites of the plasma membrane for exocytosis. Also involved in assembly of the spliceosome. The polypeptide is Exocyst complex component EXO84 (EXO84) (Candida glabrata (strain ATCC 2001 / BCRC 20586 / JCM 3761 / NBRC 0622 / NRRL Y-65 / CBS 138) (Yeast)).